The following is a 628-amino-acid chain: Protein SDS23 (628 aa).

Residues 1-126 are disordered; sequence MVNPPQPRQM…NKSSSQSIAP (126 aa). A compositionally biased stretch (polar residues) spans 15–24; the sequence is RLSTSTSSGP. Composition is skewed to low complexity over residues 40-71 and 109-123; these read QLQH…PGST and SRHA…SSQS. 2 CBS domains span residues 258–319 and 334–392; these read LHPK…RFPS and GSSN…SHLL. The disordered stretch occupies residues 551–609; the sequence is GRRTDPQAARNQRRRSSTSTTRSSIDSALSAEGILPSGSAIIGSSNAANTGRRGSVEVS. The segment covering 587–599 has biased composition (low complexity); that stretch reads SGSAIIGSSNAAN.

It belongs to the SDS23 family.

It is found in the cytoplasm. The protein localises to the nucleus. Involved in DNA replication and cell separation. This chain is Protein SDS23 (SDS24), found in Candida albicans (strain SC5314 / ATCC MYA-2876) (Yeast).